We begin with the raw amino-acid sequence, 445 residues long: Xylose isomerase (445 aa).

Active-site residues include histidine 107 and aspartate 110. The Mg(2+) site is built by glutamate 238, glutamate 274, histidine 277, aspartate 302, aspartate 313, aspartate 315, and aspartate 345.

Belongs to the xylose isomerase family. As to quaternary structure, homotetramer. The cofactor is Mg(2+).

The protein localises to the cytoplasm. It carries out the reaction alpha-D-xylose = alpha-D-xylulofuranose. This chain is Xylose isomerase (xylA), found in Priestia megaterium (strain DSM 319 / IMG 1521) (Bacillus megaterium).